A 437-amino-acid polypeptide reads, in one-letter code: Acyl-coenzyme A thioesterase 9, mitochondrial (437 aa).

Residues 1-21 constitute a mitochondrion transit peptide; the sequence is MRRAALRLCTLSKGLLAPSRG. HotDog ACOT-type domains follow at residues 84 to 207 and 287 to 399; these read SYIE…RDSE and ENSK…EKEV. K101 bears the N6-acetyllysine mark.

The protein belongs to the acyl coenzyme A hydrolase family. In terms of assembly, interacts with NYAP1, NYAP2 and MYO16.

It is found in the mitochondrion. Its subcellular location is the mitochondrion matrix. It localises to the mitochondrion inner membrane. It carries out the reaction butanoyl-CoA + H2O = butanoate + CoA + H(+). It catalyses the reaction propanoyl-CoA + H2O = propanoate + CoA + H(+). The catalysed reaction is hexadecanoyl-CoA + H2O = hexadecanoate + CoA + H(+). The enzyme catalyses octanoyl-CoA + H2O = octanoate + CoA + H(+). It carries out the reaction decanoyl-CoA + H2O = decanoate + CoA + H(+). It catalyses the reaction tetradecanoyl-CoA + H2O = tetradecanoate + CoA + H(+). The catalysed reaction is 4,8-dimethylnonanoyl-CoA + H2O = 4,8-dimethylnonanoate + CoA + H(+). The enzyme catalyses 3-methylbutanoyl-CoA + H2O = 3-methylbutanoate + CoA + H(+). It carries out the reaction 2-methylpropanoyl-CoA + H2O = 2-methylpropanoate + CoA + H(+). It participates in lipid metabolism; fatty acid metabolism. With respect to regulation, strongly inhibited by NADH and CoA. Functionally, mitochondrial acyl-CoA thioesterase. Catalyzes the hydrolysis of acyl-CoAs into free fatty acids and coenzyme A (CoA), regulating their respective intracellular levels. Regulates both mitochondrial lipid and amino acid metabolism. This chain is Acyl-coenzyme A thioesterase 9, mitochondrial (ACOT9), found in Bos taurus (Bovine).